The following is a 72-amino-acid chain: Translation initiation factor IF-1 (72 aa).

In terms of domain architecture, S1-like spans 1–72 (MAKEDNIEMQ…SKGRIVFRSR (72 aa)).

The protein belongs to the IF-1 family. As to quaternary structure, component of the 30S ribosomal translation pre-initiation complex which assembles on the 30S ribosome in the order IF-2 and IF-3, IF-1 and N-formylmethionyl-tRNA(fMet); mRNA recruitment can occur at any time during PIC assembly.

Its subcellular location is the cytoplasm. Functionally, one of the essential components for the initiation of protein synthesis. Stabilizes the binding of IF-2 and IF-3 on the 30S subunit to which N-formylmethionyl-tRNA(fMet) subsequently binds. Helps modulate mRNA selection, yielding the 30S pre-initiation complex (PIC). Upon addition of the 50S ribosomal subunit IF-1, IF-2 and IF-3 are released leaving the mature 70S translation initiation complex. This chain is Translation initiation factor IF-1, found in Sodalis glossinidius (strain morsitans).